A 1070-amino-acid polypeptide reads, in one-letter code: MPKRDDIKTILVIGSGPIVIGQAAEFDYAGTQACLSLKEEGYRVVLVNSNPATIMTDAEMADKVYIEPITLDFVSRIIRKERPDAILPTLGGQTGLNMAMELSAAGILDECNVEVLGTDLTAIKKAEDREAFRDLMNELGEPVPESDIIHNLDEAYTFVERIGYPVIVRPAYTLGGSGGGICHNEQELIETVTSGLKLSPVTQCLLEKSIAGFKEVEYEVMRDANNNAMVVCNMENIDPVGIHTGDSIVVAPSQTLSDREYQLLRDVSLKIIRALEIEGGCNVQLALDPDSYNYYVIEVNPRVSRSSALASKATGYPIAKLAAKIAVGLTLDEVRNPVTGTTFAHFEPTLDYVVAKIPRFAFDKFEQADRRLGTQMKATGEVMAIGRSWEEALLKAVRSLEIGADHLLLEEAENADEATLERKICFPEDDRLFFLAAALRRGQTIEQLHAKTKIDLFFLYKLSKTIELENRIKENPHNQEILAEAKRAGFSDAFLATCWNVDEQAIYDLRKAQNLFPVYKMVDTCAAEFESTTPYFYSTYEEENESTRSAKESVIVLGSGPIRIGQGVEFDYATVHSVWAIQQAGYEAIIINNNPETVSTDFSISDKLYFEPLTLEDVMHVIEIEQPLGVVVQFGGQTAINLADGLAKRGVKILGTSLEDTDRAENRDAFEKALEILQIPQPAGKTATSVEEAINVATDIGYPVLVRPSYVLGGRAMEIVESEEALKHYMTNAVKVNPKHPVLVDRYVSGQEVEVDAISDGENVLIPGIMEHIERAGVHSGDSIAVYPAQRLSSQVKNTIVDYTTRLATGLNIIGMLNIQYVVDGEEVFVIEVNPRSSRTAPFLSKITEIPMANVATRVILGENLIDLGYTPGLAPEKQEIFVKVPVFSFAKLRSVDTSLGPEMKSTGEVMGKDVTLEKALYKGFVASGTTMHDYGTVLLTVADRDKEEAVELAKRFNRIGFTIMATKGTASTLEEADIPVSQVKKIGENQETLIDYIRNGQVTLVVNTLTTGKRPERDGFQIRRESVENGIPVCTSLDTAEAILRVLESRSFELESMNASEVKQPKARV.

Positions 1–401 (MPKRDDIKTI…ALLKAVRSLE (401 aa)) are carboxyphosphate synthetic domain. Residues arginine 129, arginine 169, glycine 175, glycine 176, lysine 208, isoleucine 210, glutamate 215, glycine 241, isoleucine 242, histidine 243, glutamine 284, and glutamate 298 each coordinate ATP. The region spanning 133-327 (RDLMNELGEP…IAKLAAKIAV (195 aa)) is the ATP-grasp 1 domain. Residues glutamine 284, glutamate 298, and asparagine 300 each contribute to the Mg(2+) site. Mn(2+) is bound by residues glutamine 284, glutamate 298, and asparagine 300. The tract at residues 402-546 (IGADHLLLEE…YSTYEEENES (145 aa)) is oligomerization domain. The interval 547–929 (TRSAKESVIV…ALYKGFVASG (383 aa)) is carbamoyl phosphate synthetic domain. In terms of domain architecture, ATP-grasp 2 spans 671–861 (EKALEILQIP…MANVATRVIL (191 aa)). Arginine 707, arginine 746, valine 748, glutamate 752, glycine 777, valine 778, histidine 779, serine 780, glutamine 820, and glutamate 832 together coordinate ATP. Mg(2+) is bound by residues glutamine 820, glutamate 832, and asparagine 834. 3 residues coordinate Mn(2+): glutamine 820, glutamate 832, and asparagine 834. The region spanning 930 to 1070 (TTMHDYGTVL…SEVKQPKARV (141 aa)) is the MGS-like domain. The allosteric domain stretch occupies residues 930 to 1070 (TTMHDYGTVL…SEVKQPKARV (141 aa)).

Belongs to the CarB family. Composed of two chains; the small (or glutamine) chain promotes the hydrolysis of glutamine to ammonia, which is used by the large (or ammonia) chain to synthesize carbamoyl phosphate. Tetramer of heterodimers (alpha,beta)4. Mg(2+) is required as a cofactor. The cofactor is Mn(2+).

It catalyses the reaction hydrogencarbonate + L-glutamine + 2 ATP + H2O = carbamoyl phosphate + L-glutamate + 2 ADP + phosphate + 2 H(+). It carries out the reaction hydrogencarbonate + NH4(+) + 2 ATP = carbamoyl phosphate + 2 ADP + phosphate + 2 H(+). The protein operates within amino-acid biosynthesis; L-arginine biosynthesis; carbamoyl phosphate from bicarbonate: step 1/1. It participates in pyrimidine metabolism; UMP biosynthesis via de novo pathway; (S)-dihydroorotate from bicarbonate: step 1/3. Functionally, large subunit of the glutamine-dependent carbamoyl phosphate synthetase (CPSase). CPSase catalyzes the formation of carbamoyl phosphate from the ammonia moiety of glutamine, carbonate, and phosphate donated by ATP, constituting the first step of 2 biosynthetic pathways, one leading to arginine and/or urea and the other to pyrimidine nucleotides. The large subunit (synthetase) binds the substrates ammonia (free or transferred from glutamine from the small subunit), hydrogencarbonate and ATP and carries out an ATP-coupled ligase reaction, activating hydrogencarbonate by forming carboxy phosphate which reacts with ammonia to form carbamoyl phosphate. This Listeria monocytogenes serotype 4a (strain HCC23) protein is Carbamoyl phosphate synthase large chain.